The sequence spans 500 residues: Polyenoic fatty acid isomerase (500 aa).

The N-terminal stretch at 1–21 (MSLNRVLHIFLIAYLACTALT) is a signal peptide.

Homodimer. Requires an oxidized flavin as cofactor. Glycosylated.

The enzyme catalyses (5Z,8Z,11Z,14Z,17Z)-eicosapentaenoate = (5Z,7E,9E,14Z,17Z)-icosapentaenoate. In terms of biological role, involved in the biosynthesis of conjugated triene-containing fatty acids. Catalyzes the isomerization of a wide range of substrates containing three or more methylene interrupted olefins into a Z,E,E conjugated triene functionality. May be involved in a stress tolerance mechanism as response to intertidal habitats with direct sunlight, desiccation and high temperature. In vitro substrates include arachidonic acid ((5Z,8Z,11Z,14Z)-eicosatetraenoic acid), EPA ((5Z,8Z, 11Z,14Z,17Z)-eicosapentaenoic acid), DHA ((4Z,7Z,10Z,13Z,16Z,19Z)-docosahexenoic acid), adrenic acid ((7Z,10Z,13Z,16Z)-docosatetraenoic acid), anandamide (arachidonyl-N-ethanolamide) and eicosatrienoic acid ((5Z,8Z,11Z)-eicosatrienoic acid). Gamma-linolenic acid (18:3 6Z,9Z,12Z) and dihomo-gamma-linolenic acid (20:3 8Z,11Z,14Z) are transformed into mixtures of conjugated diene and triene fatty acids, linoleic acid is only transformed to a conjugated diene. The protein is Polyenoic fatty acid isomerase of Ptilota filicina (Red alga).